Reading from the N-terminus, the 173-residue chain is MARKEIIDEITMKRAITRITYEIIERNKELDKLVLIGIKTRGVYLAKRIQERLQQLEGLEIPFGELDTRPFRDDKQAQEDTTEIDIDITGKDVILVDDVLYTGRTIRAAIDGIVKLGRPARVQLAVLVDRGHRELPIRADYVGKNIPTGRDEEIIVQMSEHDGNDSILIKRED.

Residues 40 to 41 (TR), 97 to 105 (DDVLYTGRT), and Arg130 each bind substrate. The short motif at 93 to 105 (VILVDDVLYTGRT) is the PRPP-binding element.

The protein belongs to the purine/pyrimidine phosphoribosyltransferase family. PyrR subfamily.

Regulates transcriptional attenuation of the pyrimidine nucleotide (pyr) operon in response to exogenous pyrimidines, probably by binding to specific sites on pyr mRNA. This probably disrupts an antiterminator hairpin in the RNA and favors formation of a downstream transcription terminator, leading to a reduced expression of downstream genes. The polypeptide is Pyrimidine operon regulatory protein (Lactococcus lactis subsp. lactis (strain IL1403) (Streptococcus lactis)).